The primary structure comprises 374 residues: F(420)H(2) dehydrogenase subunit D (374 aa).

This sequence belongs to the complex I 49 kDa subunit family. The FPO complex is composed of at least 13 different subunits.

The protein localises to the cell inner membrane. The catalysed reaction is methanophenazine + reduced coenzyme F420-(gamma-L-Glu)(n) = dihydromethanophenazine + oxidized coenzyme F420-(gamma-L-Glu)(n) + H(+). In terms of biological role, component of the F(420)H(2) dehydrogenase (FPO complex) which is part of the energy-conserving F(420)H(2):heterodisulfide oxidoreductase system. The membrane-bound electron transfer system of the complex plays an important role in the metabolism of methylotrophic methanogens when the organisms grow on methanol or methylamines. Catalyzes the oxidation of methanophenazine to dihydromethanophenazine. It shuttles electrons from F(420)H(2), via FAD and iron-sulfur (Fe-S) centers, to methanophenazine (an electron carrier in the membrane). It couples the redox reaction to proton translocation (for every two electrons transferred, two hydrogen ions are translocated across the cytoplasmic membrane), and thus conserves the redox energy in a proton gradient. It also catalyzes the oxidation of F(420)H(2) with quinones such as 2,3-dimethyl-1,4-naphthoquinone, 2-methyl-1,4-naphthoquinone and tetramethyl-p-benzoquinone. This Methanosarcina mazei (strain ATCC BAA-159 / DSM 3647 / Goe1 / Go1 / JCM 11833 / OCM 88) (Methanosarcina frisia) protein is F(420)H(2) dehydrogenase subunit D (fpoD).